A 216-amino-acid polypeptide reads, in one-letter code: Dimethylamine corrinoid protein 2 (216 aa).

The 91-residue stretch at 1–91 folds into the B12-binding N-terminal domain; it reads MASKEELLQE…EMPAGTETKK (91 aa). In terms of domain architecture, B12-binding spans 92–216; sequence LGVIVNGTVE…AKAKELLLGK (125 aa). Methylcob(III)alamin is bound at residue H105.

It belongs to the methylamine corrinoid protein family.

It functions in the pathway one-carbon metabolism; methanogenesis from dimethylamine. Acts as a methyl group carrier between MtbB and MtbA. In Methanosarcina acetivorans (strain ATCC 35395 / DSM 2834 / JCM 12185 / C2A), this protein is Dimethylamine corrinoid protein 2 (mtbC2).